The following is a 90-amino-acid chain: Small ribosomal subunit protein uS15 (90 aa).

This sequence belongs to the universal ribosomal protein uS15 family. In terms of assembly, part of the 30S ribosomal subunit. Forms a bridge to the 50S subunit in the 70S ribosome, contacting the 23S rRNA.

Functionally, one of the primary rRNA binding proteins, it binds directly to 16S rRNA where it helps nucleate assembly of the platform of the 30S subunit by binding and bridging several RNA helices of the 16S rRNA. Its function is as follows. Forms an intersubunit bridge (bridge B4) with the 23S rRNA of the 50S subunit in the ribosome. The chain is Small ribosomal subunit protein uS15 from Helicobacter pylori (strain P12).